A 1053-amino-acid chain; its full sequence is MKKVVNSVLASALALTVAPMAFAAEEAATTTAPKMDADMEKTVKRLEALGLVAGYGNGEYGVDKTITRAEFATLVVRARGLEQGAKLAQFSNTYTDVKSTDWFAGFVNVASGEEIVKGFPDKSFKPQNQVTYAEAVTMIVRALGYEPSVKGVWPNSMISKASELNIARSITTPNNAATRGDIFKMLDNALRVDLMEQVEFGTDIRHEITKETLLTKYLKVTVRDMEWAQEAGNDSEDLPLVTNVPAIGLGKIKANEVTLNGKDAGIGNTTYKVADGINANDFDGQHVQVWIKDDKEDVIVWMEGSTDQEVIMDRVGEFTLKGKTFEDPKDLSNSDLADLKLELDASEKSYRFNKNTKVTYNFTRFNDPVDGLKEIIKDNADGGFTFGAKVVLDNNNEIAYIHVIDDQSMNKEDEGVKYGSEVISKIDTDKKKITNRDNDKFNDLDGKEEGKDFLVFLNGKPAKFSDLKEGMVYSVYYADGDEDKLLVFATDTVVEGKVDKVVSRNNNDYRLTIGDKTYRVYEGATFSDDGNKDVQDIDKDHWDLVDSLDDETVKLYLDASGRVRHIETKDAIDDRKQKAIVTRSATFNTSKDTWDFRVLTQKGKEITVSLEAKNIYDFDGKNFSRDNKNQDDLEDILVPSKDKDTLLLEVTLDADGKPGKVEFLKPVKVEQESGKAWDDLADEDDDMVGDYEVTDKTAVFNMTGKLEESSKRKELKNAKTAKFKDVADENDLSVIYTVNDKDEVEAIFVVEGDGLTGDAHYGQVIDFGRKGGKDTIRVWEKDGDKVVEKEYKLDGDQDDLKDEDIRRNDFIAFTVDSNDEVVVDDVVEVVNKNAKGMLAEVTDEKGMKDANIDKMVVGLVSDVSKDTITYKDADDNKKKASIKSATVYFDLYDDFGEADGVNEGDYVVMIDSGDISGTKYDYVLIVSDAKTVRKDKLEDDAEAFLKQEPSEKPDPDTKWDALPSKVEGKFTSAGPVKLYRATVELNSKVKAEDVDAIEFYFNGKKVEPSLLNFKDGVITIGYNTEDKVTSSKIKVTNKNGKDSDEATVTFVEA.

A signal peptide spans 1–23 (MKKVVNSVLASALALTVAPMAFA). 3 consecutive SLH domains span residues 26-89 (EAAT…KLAQ), 90-153 (FSNT…KGVW), and 154-203 (PNSM…FGTD).

In terms of assembly, the middle cell wall layer is composed of subunits of the middle cell wall protein. These proteins form a hexagonal array with a lattice constant of 14.5 nM in the middle cell wall layers.

It localises to the secreted. Its subcellular location is the cell wall. The protein localises to the S-layer. Its function is as follows. The middle wall protein binds to peptidoglycan and to the outer cell wall protein. The protein is Middle cell wall protein of Brevibacillus brevis (strain 47 / JCM 6285 / NBRC 100599).